Consider the following 275-residue polypeptide: AA9 family lytic polysaccharide monooxygenase AA9-X282 (275 aa).

The signal sequence occupies residues methionine 1–alanine 17. Cu(2+) is bound at residue histidine 18. A Phosphothreonine modification is found at threonine 20. Residues serine 43 and serine 49 each carry the phosphoserine modification. At threonine 50 the chain carries Phosphothreonine. Serine 58 bears the Phosphoserine mark. The cysteines at positions 66 and 185 are disulfide-linked. Histidine 96 contacts Cu(2+). Serine 130 is subject to Phosphoserine. Residues histidine 171 and glutamine 180 each coordinate O2. Tyrosine 182 lines the Cu(2+) pocket. The tract at residues threonine 236–proline 265 is X282 extension. The 9res motif motif lies at glycine 268–alanine 275.

Belongs to the polysaccharide monooxygenase AA9 family. It depends on Cu(2+) as a cofactor.

The protein localises to the secreted. The catalysed reaction is [(1-&gt;4)-beta-D-glucosyl]n+m + reduced acceptor + O2 = 4-dehydro-beta-D-glucosyl-[(1-&gt;4)-beta-D-glucosyl]n-1 + [(1-&gt;4)-beta-D-glucosyl]m + acceptor + H2O.. Its function is as follows. Lytic polysaccharide monooxygenase (LPMO) that depolymerizes crystalline and amorphous polysaccharides via the oxidation of scissile alpha- or beta-(1-4)-glycosidic bonds, yielding C1 oxidation products. Catalysis by LPMOs requires the reduction of the active-site copper from Cu(II) to Cu(I) by a reducing agent and H(2)O(2) or O(2) as a cosubstrate. Shows only weak binding properties to cellulose, and low cellulolytic oxidative activity which questions the involvement of X282 extension-containing AA9 proteins in the degradation of plant cell wall and opens new avenues as to the divergence of function of some AA9 members. The sequence is that of AA9 family lytic polysaccharide monooxygenase AA9-X282 from Trametes coccinea (strain BRFM310) (Pycnoporus coccineus).